Reading from the N-terminus, the 118-residue chain is Large ribosomal subunit protein uL22 (118 aa).

It belongs to the universal ribosomal protein uL22 family. Part of the 50S ribosomal subunit.

This protein binds specifically to 23S rRNA; its binding is stimulated by other ribosomal proteins, e.g. L4, L17, and L20. It is important during the early stages of 50S assembly. It makes multiple contacts with different domains of the 23S rRNA in the assembled 50S subunit and ribosome. In terms of biological role, the globular domain of the protein is located near the polypeptide exit tunnel on the outside of the subunit, while an extended beta-hairpin is found that lines the wall of the exit tunnel in the center of the 70S ribosome. The polypeptide is Large ribosomal subunit protein uL22 (Thermomicrobium roseum (strain ATCC 27502 / DSM 5159 / P-2)).